The sequence spans 577 residues: MAKGSWFFIILFIISMLENMINSLELDRHSFPDDFIFGTAASAFQYEGATSEGGKSPTIWDHFSLTYPERTKMHNADVAIDFYHRYKDDIKLMKELNMDAFRFSISWSRLIPSGKLKDGVNKEGVQFYKDLIDELLANDIQPSMTLYHWDHPQSLEDEYGGFLSPKIVEDFRDFARICFEEFGDKVKMWTTINEPYIMTVAGYDQGNKAAGRCSKWVNEKCQAGDSSTEPYIVSHHTLLAHAAAVEEFRKCEKTSHDGQIGIVLSPRWFEPYHSDSTDDKEAAERALAFEIGWHLDPVIHGDYPEIVKKYAGNKLPSFTVEQSKMLQNSSDFVGINYYTARFAAHLPHIDPEKPRFKTDHHVEWKLTNHSGHIIGPGEERGFLFSHPEGLRKVLNYIKERYNNMPVYIKENGINDNDDGTKPREEIVKDTFRIEYHKTHFEELHKAIVEDGCDVRGYYAWSLMDNFEWEHGYTARFGLYYVDFVNGLKRYPKDSVKWFKRFLKKSVVGESNKEEVEEMSRAEGNKTFKGFEESAGFFASFMAMNQSRRDEENNRCSFDFPHTHFGVLQGIENPSSFY.

The signal sequence occupies residues 1-23 (MAKGSWFFIILFIISMLENMINS). A beta-D-glucoside contacts are provided by residues Q45, H148, and 193–194 (NE). The active-site Proton donor is E194. The cysteines at positions 213 and 221 are disulfide-linked. The N-linked (GlcNAc...) asparagine glycan is linked to N328. Y338 contributes to the a beta-D-glucoside binding site. An N-linked (GlcNAc...) asparagine glycan is attached at N368. A beta-D-glucoside contacts are provided by residues E410, W460, 467 to 468 (EW), and F476. E410 (nucleophile) is an active-site residue. N-linked (GlcNAc...) asparagine glycosylation is found at N524 and N544.

The protein belongs to the glycosyl hydrolase 1 family.

It catalyses the reaction Hydrolysis of terminal, non-reducing beta-D-glucosyl residues with release of beta-D-glucose.. The chain is Beta-glucosidase 30 from Arabidopsis thaliana (Mouse-ear cress).